Here is a 291-residue protein sequence, read N- to C-terminus: Probable 2-(5''-triphosphoribosyl)-3'-dephosphocoenzyme-A synthase (291 aa).

It belongs to the CitG/MdcB family.

It catalyses the reaction 3'-dephospho-CoA + ATP = 2'-(5''-triphospho-alpha-D-ribosyl)-3'-dephospho-CoA + adenine. Involved in the formation of 2-(5''-phosphoribosyl)-3'-dephosphocoenzyme-A, the prosthetic group of the acyl-carrier protein of the malonate decarboxylase. This chain is Probable 2-(5''-triphosphoribosyl)-3'-dephosphocoenzyme-A synthase, found in Pseudomonas savastanoi pv. phaseolicola (strain 1448A / Race 6) (Pseudomonas syringae pv. phaseolicola (strain 1448A / Race 6)).